The chain runs to 593 residues: MEPATAPRPDMAPELTPEEEQATKQFLEEINKWTVQYNVSPLSWNVAVKFLMARKFDVLRAVELFHCYRETRRKEGIVKLKPHEEPLRSEILSGKFTILNVRDPTGASIALFTARLHHPHKSAQHVVLQALFYLLDRAVDSFETQRNGLVFIYDMCGSNYANFELDLGKKVLNLLKGAFPARLKKVLIVGAPIWFRVPYSIISLLLKDKVRERIQILKTSEVTQHLPRECLPENLGGYVKIDLATWNFQFLPQVNGHPDPFDEIILSSLPPALDWDSVHVPGPHAMTIQELVDYVNTRQKRGIYEEYEDIRRENPVGTFHCSMSPGNLEKNRYGDVPCLDQTRVKLTKRSGHTQTDYINASFMDGYKQKNAYIGTQGPLENTYRDFWLMVWEQKVLVIVMTTRFEEGGRRKCGQYWPLEKDSRIRFGFLTVTNLGVENMNHYKKTTLEIHNTEERQKRQVTHFQFLSWPDYGVPSSAASLIDFLRVVRNQQSMAVGNLGARSKGQCPEPPIVVHCSAGIGRTGTFCSLDICLAQLEELGTLNVFQTVSRMRTQRAFSIQTPEQYYFCYKAILEFAEREGMVPSGHSLLAMDGQ.

The residue at position 1 (Met-1) is an N-acetylmethionine. The tract at residues 1–20 (MEPATAPRPDMAPELTPEEE) is disordered. Positions 84-243 (EEPLRSEILS…NLGGYVKIDL (160 aa)) constitute a CRAL-TRIO domain. The Tyrosine-protein phosphatase domain occupies 303-574 (IYEEYEDIRR…YFCYKAILEF (272 aa)). Cys-515 acts as the Phosphocysteine intermediate in catalysis.

It belongs to the protein-tyrosine phosphatase family. Non-receptor class 3 subfamily.

The protein resides in the cytoplasm. The catalysed reaction is O-phospho-L-tyrosyl-[protein] + H2O = L-tyrosyl-[protein] + phosphate. Protein-tyrosine phosphatase that could participate in the transfer of hydrophobic ligands or in functions of the Golgi apparatus. The chain is Tyrosine-protein phosphatase non-receptor type 9 (Ptpn9) from Mus musculus (Mouse).